The following is a 440-amino-acid chain: Chromosome partition protein MukF (440 aa).

The tract at residues 208-236 is leucine-zipper; that stretch reads LSETSGTLRELQDTLEAAGDKLQANLLRI.

It belongs to the MukF family. Interacts, and probably forms a ternary complex, with MukE and MukB via its C-terminal region. The complex formation is stimulated by calcium or magnesium. It is required for an interaction between MukE and MukB.

The protein resides in the cytoplasm. The protein localises to the nucleoid. Involved in chromosome condensation, segregation and cell cycle progression. May participate in facilitating chromosome segregation by condensation DNA from both sides of a centrally located replisome during cell division. Not required for mini-F plasmid partitioning. Probably acts via its interaction with MukB and MukE. Overexpression results in anucleate cells. It has a calcium binding activity. In Edwardsiella ictaluri (strain 93-146), this protein is Chromosome partition protein MukF.